An 83-amino-acid chain; its full sequence is MTEQSSRTVQGRVVSNKMDKTITVAVERKVKSPIYGKFIKRTTKLHAHDETNQCNTGDVVTVRECRPMSKSKNWMLVDIVTKA.

The protein belongs to the universal ribosomal protein uS17 family. Part of the 30S ribosomal subunit.

One of the primary rRNA binding proteins, it binds specifically to the 5'-end of 16S ribosomal RNA. This chain is Small ribosomal subunit protein uS17, found in Pseudoalteromonas atlantica (strain T6c / ATCC BAA-1087).